Consider the following 215-residue polypeptide: Adenylate kinase (215 aa).

10-15 (GAGKGT) is an ATP binding site. Residues 30-59 (STGDMFRAAMKNNTELGRKAKSFMDNGDLV) are NMP. Residues Thr-31, Arg-36, 57–59 (DLV), 85–88 (GFPR), and Gln-92 each bind AMP. An LID region spans residues 126–163 (GRWICRTCGKTYHEIYNPPKVAGKCDLDGGELYQRDDD). Arg-127 is an ATP binding site. Cys-130 and Cys-133 together coordinate Zn(2+). Residue 136–137 (TY) coordinates ATP. Cys-150 and Asp-153 together coordinate Zn(2+). 2 residues coordinate AMP: Arg-160 and Arg-171. Gln-199 is a binding site for ATP.

This sequence belongs to the adenylate kinase family. In terms of assembly, monomer.

Its subcellular location is the cytoplasm. The enzyme catalyses AMP + ATP = 2 ADP. Its pathway is purine metabolism; AMP biosynthesis via salvage pathway; AMP from ADP: step 1/1. Catalyzes the reversible transfer of the terminal phosphate group between ATP and AMP. Plays an important role in cellular energy homeostasis and in adenine nucleotide metabolism. The chain is Adenylate kinase from Listeria monocytogenes serotype 4a (strain HCC23).